The primary structure comprises 1009 residues: Protein translocase subunit SecA (1009 aa).

ATP contacts are provided by residues Gln86, 104 to 108 (GEGKT), and Asp497. Disordered stretches follow at residues 869–894 (AVPQ…GQQP) and 949–1009 (ERRP…RNAG). 2 stretches are compositionally biased toward low complexity: residues 883 to 894 (PVPAATAPGQQP) and 953 to 973 (SGAA…AGAG). The Zn(2+) site is built by Cys990, Cys992, Cys1001, and His1002.

It belongs to the SecA family. Monomer and homodimer. Part of the essential Sec protein translocation apparatus which comprises SecA, SecYEG and auxiliary proteins SecDF. Other proteins may also be involved. Requires Zn(2+) as cofactor.

The protein localises to the cell membrane. It is found in the cytoplasm. The catalysed reaction is ATP + H2O + cellular proteinSide 1 = ADP + phosphate + cellular proteinSide 2.. Functionally, part of the Sec protein translocase complex. Interacts with the SecYEG preprotein conducting channel. Has a central role in coupling the hydrolysis of ATP to the transfer of proteins into and across the cell membrane, serving as an ATP-driven molecular motor driving the stepwise translocation of polypeptide chains across the membrane. The chain is Protein translocase subunit SecA from Acidothermus cellulolyticus (strain ATCC 43068 / DSM 8971 / 11B).